The chain runs to 189 residues: Leucine repeat adapter protein 25 (189 aa).

At Ser-28 the chain carries Phosphoserine. The interval Glu-54 to Arg-82 is disordered. A compositionally biased stretch (low complexity) spans Ala-68 to Gly-79. The LRR repeat unit spans residues Leu-86 to Leu-114. Positions Ser-136–Asn-175 are disordered. Over residues Ala-159–Thr-169 the composition is skewed to pro residues. Ser-188 carries the post-translational modification Phosphoserine.

The protein belongs to the FAM89 family. In terms of assembly, interacts with SKI. Interacts (via LRR repeat) with CDC42BPA (via AGC-kinase C-terminal domain), CDC42BPB (via AGC-kinase C-terminal domain) and LIMK1 (via LIM zinc-binding domains). Forms a tripartite complex with CDC42BPA, CDC42BPB and LIMK1. (Microbial infection) Interacts with mouse mammary tumor virus (MMTV) envelope glycoprotein gp70. As to expression, widely expressed. Expressed in the early postnatal brain.

It is found in the cytoplasm. It localises to the cell projection. The protein resides in the lamellipodium. Its subcellular location is the cell surface. In terms of biological role, negatively regulates TGF-beta-induced signaling; in cooperation with SKI prevents the translocation of SMAD2 from the nucleus to the cytoplasm in response to TGF-beta. Acts as an adapter that mediates the specific recognition of LIMK1 by CDC42BPA and CDC42BPB in the lamellipodia. LRAP25-mediated CDC42BPA/CDC42BPB targeting to LIMK1 and the lamellipodium results in LIMK1 activation and the subsequent phosphorylation of CFL1 which is important for lamellipodial F-actin regulation. (Microbial infection) May be a receptor for mouse mammary tumor virus (MMTV). The sequence is that of Leucine repeat adapter protein 25 from Mus musculus (Mouse).